The primary structure comprises 239 residues: UPF0173 metal-dependent hydrolase rrnAC0300 (239 aa).

It belongs to the UPF0173 family.

The polypeptide is UPF0173 metal-dependent hydrolase rrnAC0300 (Haloarcula marismortui (strain ATCC 43049 / DSM 3752 / JCM 8966 / VKM B-1809) (Halobacterium marismortui)).